Consider the following 198-residue polypeptide: Guanylyl cyclase-activating protein 2 (198 aa).

Gly-2 is lipidated: N-myristoyl glycine. EF-hand domains follow at residues 16 to 51 (DVAELQEWYKKFVVECPSGTLFMHEFKRFFGVQDNH), 52 to 87 (EAAEYIENMFRAFDKNGDNTIDFLEYVAALNLVLRG), 88 to 123 (KLEHKLRWTFKVYDKDGNGCIDKPELLEIVESIYKL), and 139 to 174 (TPEEVVDRIFQLVDENGDGQLSLDEFIDGARKDKWV). Residues Asp-65, Asn-67, Asp-69, Thr-71, Glu-76, Asp-101, Asp-103, Asn-105, Cys-107, Glu-112, Asp-152, Asn-154, Asp-156, Gln-158, and Glu-163 each coordinate Ca(2+).

Undergoes dimerization at low calcium ions concentration, while the presence of calcium ions inhibits its dimerization. Dimerization correlates with its ability to activate GC. Retina and pineal gland.

Stimulates synthesis of cGMP in photoreceptors. Thought to mediate Ca(2+)-sensitive regulation of retinal guanylyl cyclase (GC), a key event in recovery of the dark state of rod photoreceptors following light exposure. This Gallus gallus (Chicken) protein is Guanylyl cyclase-activating protein 2 (GUCA1B).